The primary structure comprises 265 residues: Phosphate import ATP-binding protein PstB (265 aa).

Residues 18-260 form the ABC transporter domain; it reads ISARDVQVFY…PEDPRTESYI (243 aa). 50–57 is an ATP binding site; sequence GPSGCGKS.

The protein belongs to the ABC transporter superfamily. Phosphate importer (TC 3.A.1.7) family. As to quaternary structure, the complex is composed of two ATP-binding proteins (PstB), two transmembrane proteins (PstC and PstA) and a solute-binding protein (PstS).

Its subcellular location is the cell inner membrane. It carries out the reaction phosphate(out) + ATP + H2O = ADP + 2 phosphate(in) + H(+). Functionally, part of the ABC transporter complex PstSACB involved in phosphate import. Responsible for energy coupling to the transport system. The polypeptide is Phosphate import ATP-binding protein PstB (Roseobacter denitrificans (strain ATCC 33942 / OCh 114) (Erythrobacter sp. (strain OCh 114))).